Consider the following 361-residue polypeptide: Phospho-N-acetylmuramoyl-pentapeptide-transferase (361 aa).

The next 10 helical transmembrane spans lie at 21–41 (YITF…FVIG), 72–92 (TPTM…LLWV), 94–114 (LANV…LIGF), 135–155 (LAWT…VTPH), 169–189 (LLVN…VGAS), 200–220 (GLAI…AYLS), 240–260 (LAVF…FNAP), 263–283 (MVFM…AVSV), 289–309 (LVLA…MVQV), and 338–358 (TVVI…LSTL).

It belongs to the glycosyltransferase 4 family. MraY subfamily. Mg(2+) is required as a cofactor.

The protein resides in the cell inner membrane. The catalysed reaction is UDP-N-acetyl-alpha-D-muramoyl-L-alanyl-gamma-D-glutamyl-meso-2,6-diaminopimeloyl-D-alanyl-D-alanine + di-trans,octa-cis-undecaprenyl phosphate = di-trans,octa-cis-undecaprenyl diphospho-N-acetyl-alpha-D-muramoyl-L-alanyl-D-glutamyl-meso-2,6-diaminopimeloyl-D-alanyl-D-alanine + UMP. Its pathway is cell wall biogenesis; peptidoglycan biosynthesis. Functionally, catalyzes the initial step of the lipid cycle reactions in the biosynthesis of the cell wall peptidoglycan: transfers peptidoglycan precursor phospho-MurNAc-pentapeptide from UDP-MurNAc-pentapeptide onto the lipid carrier undecaprenyl phosphate, yielding undecaprenyl-pyrophosphoryl-MurNAc-pentapeptide, known as lipid I. The sequence is that of Phospho-N-acetylmuramoyl-pentapeptide-transferase from Rhodospirillum centenum (strain ATCC 51521 / SW).